The chain runs to 879 residues: Phosphoenolpyruvate carboxylase (879 aa).

Residues H141 and K546 contribute to the active site.

This sequence belongs to the PEPCase type 1 family. Requires Mg(2+) as cofactor.

It carries out the reaction oxaloacetate + phosphate = phosphoenolpyruvate + hydrogencarbonate. In terms of biological role, forms oxaloacetate, a four-carbon dicarboxylic acid source for the tricarboxylic acid cycle. The protein is Phosphoenolpyruvate carboxylase of Stutzerimonas stutzeri (strain A1501) (Pseudomonas stutzeri).